The chain runs to 182 residues: CDP-diacylglycerol--glycerol-3-phosphate 3-phosphatidyltransferase (182 aa).

At 1 to 12 (MQLNIPTWLTLF) the chain is on the cytoplasmic side. A helical transmembrane segment spans residues 13–37 (RVVLIPFFVLAFYLPFVWAPMVCAI). At 38 to 60 (IFVFAAATDWFDGFLARRWKQTT) the chain is on the periplasmic side. A helical transmembrane segment spans residues 61–81 (RFGAFLDPVADKVMVAVALVL). Over 82-86 (VAEHY) the chain is Cytoplasmic. Residues 87 to 107 (HSWWITLPAATMIAREIIISS) traverse the membrane as a helical segment. Residues 108–145 (LREWMAEIGKRSSVAVSWVGKVKTMAQMGSLVGLLWRP) are Periplasmic-facing. The chain crosses the membrane as a helical span at residues 146–168 (DHNVELASFVLLYIAAVLTFWSM). The Cytoplasmic segment spans residues 169-181 (FQYLNAAWSDLLE).

It belongs to the CDP-alcohol phosphatidyltransferase class-I family.

It is found in the cell inner membrane. The catalysed reaction is a CDP-1,2-diacyl-sn-glycerol + sn-glycerol 3-phosphate = a 1,2-diacyl-sn-glycero-3-phospho-(1'-sn-glycero-3'-phosphate) + CMP + H(+). It functions in the pathway phospholipid metabolism; phosphatidylglycerol biosynthesis; phosphatidylglycerol from CDP-diacylglycerol: step 1/2. In terms of biological role, catalyzes the conversion of cytidine diphosphate diacylglycerol (CDP-DG) and glycerol 3-phosphate into phosphatidylglycerol. Essential for the synthesis of anionic phospholipids, thereby playing a role in balancing the ratio of zwitterionic and anionic phospholipids, which is thought to be important for normal membrane function. The chain is CDP-diacylglycerol--glycerol-3-phosphate 3-phosphatidyltransferase from Yersinia pestis bv. Antiqua (strain Antiqua).